Here is a 365-residue protein sequence, read N- to C-terminus: Zinc transporter 7 (365 aa).

An N-terminal signal peptide occupies residues 1-26 (MAYSKACYKLTTITILLLSFTLPSLA). Topologically, residues 27 to 56 (GNAENADVSECKAESGDLSCHNNKEAQKLK) are extracellular. The helical transmembrane segment at 57–77 (IIAIPSILVASMIGVSLPLFS) threads the bilayer. Over 78-90 (RSIPALGPDREMS) the chain is Cytoplasmic. A helical membrane pass occupies residues 91–111 (VIVKTLASGVILATGFMHVLP). The Extracellular segment spans residues 112–129 (DSFDDLTSKCLPEDPWQK). A helical transmembrane segment spans residues 130-150 (FPFATFITMISALLVLMIESF). At 151–210 (AMCAYARRTSKREGEVVPLENGSNSVDTQNDIQTLENGSSYVEKQEKVNEDKTSELLRNK) the chain is on the cytoplasmic side. Residues 211–231 (VIAQILELGIVVHSVVIGLAM) form a helical membrane-spanning segment. Residues 232 to 242 (GASDNKCTVQS) lie on the Extracellular side of the membrane. The helical transmembrane segment at 243 to 263 (LIAALCFHQLFEGMGLGGSIL) threads the bilayer. Topologically, residues 264 to 272 (QAQFKSKTN) are cytoplasmic. Residues 273–293 (WTMVFFFSVTTPFGIVLGMAI) traverse the membrane as a helical segment. Over 294-304 (QKIYDETSPTA) the chain is Extracellular. A helical transmembrane segment spans residues 305–325 (LIVVGVLNACSAGLLIYMALV). Residues 326–344 (NLLAHEFFGPKIQGNIKLH) are Cytoplasmic-facing. The chain crosses the membrane as a helical span at residues 345–365 (VLGYVATFTGAAGMSLMAKWA).

It belongs to the ZIP transporter (TC 2.A.5) family.

The protein resides in the cell membrane. Probably mediates zinc uptake from the rhizosphere. This is Zinc transporter 7 (ZIP7) from Arabidopsis thaliana (Mouse-ear cress).